A 381-amino-acid polypeptide reads, in one-letter code: Putative F-box protein At4g17200 (381 aa).

The 47-residue stretch at Met-1–Ala-47 folds into the F-box domain.

In Arabidopsis thaliana (Mouse-ear cress), this protein is Putative F-box protein At4g17200.